Reading from the N-terminus, the 709-residue chain is NAD(P)H-quinone oxidoreductase subunit 5, chloroplastic (709 aa).

A run of 14 helical transmembrane segments spans residues 9-29, 40-60, 89-109, 125-145, 147-167, 219-239, 257-277, 280-300, 327-347, 354-374, 396-416, 425-445, 540-560, and 594-614; these read WIIP…LLLF, WAFP…DLSI, IDSL…FVLI, FAYM…SNLI, IYXF…FWFT, NEVH…GAVA, PTPI…IFLV, LLPL…IGII, LGYM…FHLI, ALLF…VGYS, IAFL…CFWS, WLYS…TASY, LFPM…AIPF, and FLTN…TAFL.

This sequence belongs to the complex I subunit 5 family. NDH is composed of at least 16 different subunits, 5 of which are encoded in the nucleus.

It is found in the plastid. The protein localises to the chloroplast thylakoid membrane. The enzyme catalyses a plastoquinone + NADH + (n+1) H(+)(in) = a plastoquinol + NAD(+) + n H(+)(out). It carries out the reaction a plastoquinone + NADPH + (n+1) H(+)(in) = a plastoquinol + NADP(+) + n H(+)(out). In terms of biological role, NDH shuttles electrons from NAD(P)H:plastoquinone, via FMN and iron-sulfur (Fe-S) centers, to quinones in the photosynthetic chain and possibly in a chloroplast respiratory chain. The immediate electron acceptor for the enzyme in this species is believed to be plastoquinone. Couples the redox reaction to proton translocation, and thus conserves the redox energy in a proton gradient. This chain is NAD(P)H-quinone oxidoreductase subunit 5, chloroplastic (ndhF), found in Pachira aquatica (Guiana chestnut).